A 195-amino-acid polypeptide reads, in one-letter code: 4'-phosphopantetheinyl transferase AcpT (195 aa).

The protein belongs to the P-Pant transferase superfamily. Gsp/Sfp/HetI/AcpT family.

It catalyses the reaction apo-[ACP] + CoA = holo-[ACP] + adenosine 3',5'-bisphosphate + H(+). May be involved in an alternative pathway for phosphopantetheinyl transfer and holo-ACP synthesis in E.coli. The native apo-protein substrate is unknown. Is able to functionally replace AcpS in vivo but only when expressed at high levels. The polypeptide is 4'-phosphopantetheinyl transferase AcpT (acpT) (Escherichia coli O157:H7).